The primary structure comprises 216 residues: Deoxyribose-phosphate aldolase (216 aa).

Residue D89 is the Proton donor/acceptor of the active site. K153 functions as the Schiff-base intermediate with acetaldehyde in the catalytic mechanism. K182 acts as the Proton donor/acceptor in catalysis.

Belongs to the DeoC/FbaB aldolase family. DeoC type 1 subfamily.

It localises to the cytoplasm. It carries out the reaction 2-deoxy-D-ribose 5-phosphate = D-glyceraldehyde 3-phosphate + acetaldehyde. Its pathway is carbohydrate degradation; 2-deoxy-D-ribose 1-phosphate degradation; D-glyceraldehyde 3-phosphate and acetaldehyde from 2-deoxy-alpha-D-ribose 1-phosphate: step 2/2. Its function is as follows. Catalyzes a reversible aldol reaction between acetaldehyde and D-glyceraldehyde 3-phosphate to generate 2-deoxy-D-ribose 5-phosphate. The protein is Deoxyribose-phosphate aldolase of Treponema denticola (strain ATCC 35405 / DSM 14222 / CIP 103919 / JCM 8153 / KCTC 15104).